A 272-amino-acid polypeptide reads, in one-letter code: Glutamate 5-kinase (272 aa).

Lys15 is a binding site for ATP. Positions 55, 142, and 158 each coordinate substrate. Residues 178–179 and 220–226 contribute to the ATP site; these read SD and TGGMLSK.

This sequence belongs to the glutamate 5-kinase family.

It localises to the cytoplasm. It carries out the reaction L-glutamate + ATP = L-glutamyl 5-phosphate + ADP. The protein operates within amino-acid biosynthesis; L-proline biosynthesis; L-glutamate 5-semialdehyde from L-glutamate: step 1/2. Its function is as follows. Catalyzes the transfer of a phosphate group to glutamate to form L-glutamate 5-phosphate. The sequence is that of Glutamate 5-kinase from Streptococcus equi subsp. zooepidemicus (strain H70).